The chain runs to 433 residues: Trigger factor (433 aa).

The 86-residue stretch at 163–248 folds into the PPIase FKBP-type domain; the sequence is GDTVNIDFSG…VNEIKFKEVP (86 aa).

The protein belongs to the FKBP-type PPIase family. Tig subfamily.

The protein localises to the cytoplasm. The enzyme catalyses [protein]-peptidylproline (omega=180) = [protein]-peptidylproline (omega=0). Involved in protein export. Acts as a chaperone by maintaining the newly synthesized protein in an open conformation. Functions as a peptidyl-prolyl cis-trans isomerase. The polypeptide is Trigger factor (Staphylococcus aureus (strain Newman)).